A 41-amino-acid polypeptide reads, in one-letter code: Cytochrome b559 subunit beta (41 aa).

Residues 16–32 traverse the membrane as a helical segment; that stretch reads WLAVHALAIPTVFFLGS. Residue H20 coordinates heme.

The protein belongs to the PsbE/PsbF family. In terms of assembly, heterodimer of an alpha subunit and a beta subunit. PSII is composed of 1 copy each of membrane proteins PsbA, PsbB, PsbC, PsbD, PsbE, PsbF, PsbH, PsbI, PsbJ, PsbK, PsbL, PsbM, PsbT, PsbY, PsbZ, Psb30/Ycf12, at least 3 peripheral proteins of the oxygen-evolving complex and a large number of cofactors. It forms dimeric complexes. It depends on heme b as a cofactor.

Its subcellular location is the plastid. The protein localises to the chloroplast thylakoid membrane. Functionally, this b-type cytochrome is tightly associated with the reaction center of photosystem II (PSII). PSII is a light-driven water:plastoquinone oxidoreductase that uses light energy to abstract electrons from H(2)O, generating O(2) and a proton gradient subsequently used for ATP formation. It consists of a core antenna complex that captures photons, and an electron transfer chain that converts photonic excitation into a charge separation. The polypeptide is Cytochrome b559 subunit beta (Euglena gracilis).